The sequence spans 57 residues: Potassium channel toxin alpha-KTx 17.2 (57 aa).

The first 26 residues, 1–26 (MKTIIVLLLLTIVAAAVVESSPKARR), serve as a signal peptide directing secretion. Disulfide bonds link Cys-30/Cys-46, Cys-36/Cys-51, and Cys-40/Cys-53.

Belongs to the short scorpion toxin superfamily. Potassium channel inhibitor family. Alpha-KTx 17 subfamily. In terms of tissue distribution, expressed by the venom gland.

The protein localises to the secreted. Functionally, inhibits voltage-gated potassium channels. The polypeptide is Potassium channel toxin alpha-KTx 17.2 (Lychas mucronatus (Chinese swimming scorpion)).